A 310-amino-acid chain; its full sequence is Protoheme IX farnesyltransferase 2 (310 aa).

9 consecutive transmembrane segments (helical) span residues 21–41 (IWYL…GIYG), 46–66 (IATW…ANVL), 99–119 (FGLF…LTTT), 125–145 (WAAA…SYML), 153–173 (IVLG…AVTT), 180–200 (GLVM…ALTL), 226–246 (VIAV…LITL), 256–276 (VYLA…AWVV), and 284–304 (AWVL…ALMV).

The protein belongs to the UbiA prenyltransferase family. Protoheme IX farnesyltransferase subfamily.

It is found in the cell membrane. It catalyses the reaction heme b + (2E,6E)-farnesyl diphosphate + H2O = Fe(II)-heme o + diphosphate. It participates in porphyrin-containing compound metabolism; heme O biosynthesis; heme O from protoheme: step 1/1. In terms of biological role, converts heme B (protoheme IX) to heme O by substitution of the vinyl group on carbon 2 of heme B porphyrin ring with a hydroxyethyl farnesyl side group. In Cenarchaeum symbiosum (strain A), this protein is Protoheme IX farnesyltransferase 2.